Reading from the N-terminus, the 380-residue chain is Cytochrome b (380 aa).

Transmembrane regions (helical) follow at residues 34–54 (FGSLLGICLATQILTGLLLAM), 78–99 (WLIRNLHANGASLFFICIYMHI), 114–134 (WNTGIILLLTLMATAFVGYVL), and 179–199 (FFALHFLLPFLIAGLTLIHLT). Residues His-84 and His-98 each coordinate heme b. Heme b-binding residues include His-183 and His-197. His-202 contacts a ubiquinone. 4 helical membrane-spanning segments follow: residues 227-247 (LKDILGFMLMYLPLMTLALFT), 289-309 (LGGVLALAASVLILFLSPLLH), 321-341 (LSQSLFWLLVTNLLILTWVGS), and 348-368 (FIIIGQLASLSYFTTLLILLP).

This sequence belongs to the cytochrome b family. In terms of assembly, the cytochrome bc1 complex contains 11 subunits: 3 respiratory subunits (MT-CYB, CYC1 and UQCRFS1), 2 core proteins (UQCRC1 and UQCRC2) and 6 low-molecular weight proteins (UQCRH/QCR6, UQCRB/QCR7, UQCRQ/QCR8, UQCR10/QCR9, UQCR11/QCR10 and a cleavage product of UQCRFS1). This cytochrome bc1 complex then forms a dimer. Requires heme b as cofactor.

The protein resides in the mitochondrion inner membrane. Its function is as follows. Component of the ubiquinol-cytochrome c reductase complex (complex III or cytochrome b-c1 complex) that is part of the mitochondrial respiratory chain. The b-c1 complex mediates electron transfer from ubiquinol to cytochrome c. Contributes to the generation of a proton gradient across the mitochondrial membrane that is then used for ATP synthesis. The polypeptide is Cytochrome b (MT-CYB) (Falco peregrinus (Peregrine falcon)).